We begin with the raw amino-acid sequence, 273 residues long: Undecaprenyl-diphosphatase (273 aa).

8 helical membrane-spanning segments follow: residues 13–35, 45–62, 82–102, 108–128, 144–164, 186–206, 219–239, and 250–270; these read GLVEGFTEFLPISSTGHLIVFGN, VFEIAIQLGAVLAVVFEY, FVLNLAIAFIPAAVMGLLFGK, LFNPLSVAVMLVLGGLFILWV, ALRPIDALMIGVAQVFALIPG, TEFSFFLAVPMMVAATAYDVL, LILIGFVAAFVSGLVAVKALL, and FAYYRIVFGIAIIILWLSGWI.

This sequence belongs to the UppP family.

Its subcellular location is the cell inner membrane. It catalyses the reaction di-trans,octa-cis-undecaprenyl diphosphate + H2O = di-trans,octa-cis-undecaprenyl phosphate + phosphate + H(+). In terms of biological role, catalyzes the dephosphorylation of undecaprenyl diphosphate (UPP). Confers resistance to bacitracin. The sequence is that of Undecaprenyl-diphosphatase from Neisseria meningitidis serogroup C (strain 053442).